The primary structure comprises 214 residues: Acetoin utilization protein AcuB (214 aa).

CBS domains follow at residues 7 to 66 (MKRD…ENKR) and 78 to 135 (MKKD…GADQ).

In terms of assembly, interacts with YabA.

It functions in the pathway ketone degradation; acetoin degradation. Functionally, role in growth and sporulation on acetoin or butanediol. Involved in the breakdown of these compounds used as a carbon source. The protein is Acetoin utilization protein AcuB (acuB) of Bacillus subtilis (strain 168).